The chain runs to 185 residues: Elongation factor P (185 aa).

This sequence belongs to the elongation factor P family.

Its subcellular location is the cytoplasm. The protein operates within protein biosynthesis; polypeptide chain elongation. In terms of biological role, involved in peptide bond synthesis. Stimulates efficient translation and peptide-bond synthesis on native or reconstituted 70S ribosomes in vitro. Probably functions indirectly by altering the affinity of the ribosome for aminoacyl-tRNA, thus increasing their reactivity as acceptors for peptidyl transferase. This chain is Elongation factor P, found in Trichodesmium erythraeum (strain IMS101).